The following is a 473-amino-acid chain: Photosystem II CP43 reaction center protein (473 aa).

The propeptide occupies 1–14 (MKTLYSLRRFYPVE). Threonine 15 is subject to N-acetylthreonine. Phosphothreonine is present on threonine 15. Transmembrane regions (helical) follow at residues 69–93 (LFEVAHFVPEKPMYEQGLILLPHLA), 134–155 (LLGPETLEESFPFFGYVWKDRN), 178–200 (KALYFGGVYDTWAPGGGDVRKIT), 255–275 (KPFAWARRALVWSGEAYLSYS), and 291–312 (WFNNTAYPSEFYGPTGPEASQA). Glutamate 367 contacts [CaMn4O5] cluster. Residues 447 to 471 (RARAAAAGFEKGIDRDFEPVLSMTP) traverse the membrane as a helical segment.

Belongs to the PsbB/PsbC family. PsbC subfamily. As to quaternary structure, PSII is composed of 1 copy each of membrane proteins PsbA, PsbB, PsbC, PsbD, PsbE, PsbF, PsbH, PsbI, PsbJ, PsbK, PsbL, PsbM, PsbT, PsbX, PsbY, PsbZ, Psb30/Ycf12, at least 3 peripheral proteins of the oxygen-evolving complex and a large number of cofactors. It forms dimeric complexes. It depends on Binds multiple chlorophylls and provides some of the ligands for the Ca-4Mn-5O cluster of the oxygen-evolving complex. It may also provide a ligand for a Cl- that is required for oxygen evolution. PSII binds additional chlorophylls, carotenoids and specific lipids. as a cofactor.

The protein resides in the plastid. It localises to the chloroplast thylakoid membrane. One of the components of the core complex of photosystem II (PSII). It binds chlorophyll and helps catalyze the primary light-induced photochemical processes of PSII. PSII is a light-driven water:plastoquinone oxidoreductase, using light energy to abstract electrons from H(2)O, generating O(2) and a proton gradient subsequently used for ATP formation. This Eucalyptus globulus subsp. globulus (Tasmanian blue gum) protein is Photosystem II CP43 reaction center protein.